We begin with the raw amino-acid sequence, 86 residues long: YcgL domain-containing protein IL1825 (86 aa).

The YcgL domain maps to 1–85 (MLCDVYRSSK…KREELQVNVN (85 aa)).

This chain is YcgL domain-containing protein IL1825, found in Idiomarina loihiensis (strain ATCC BAA-735 / DSM 15497 / L2-TR).